The following is a 35-amino-acid chain: Surfactant protein C (35 aa).

Residues Cys-5 and Cys-6 are each lipidated (S-palmitoyl cysteine).

The protein resides in the secreted. It localises to the extracellular space. Its subcellular location is the surface film. Pulmonary surfactant associated proteins promote alveolar stability by lowering the surface tension at the air-liquid interface in the peripheral air spaces. In Sus scrofa (Pig), this protein is Surfactant protein C (SFTPC).